Here is a 29-residue protein sequence, read N- to C-terminus: Kappa-sparatoxin-Hv1e (29 aa).

Intrachain disulfides connect cysteine 3–cysteine 17, cysteine 10–cysteine 22, and cysteine 16–cysteine 26.

As to expression, expressed by the venom gland.

It localises to the secreted. Its function is as follows. Inhibitor of voltage-gated potassium channels of the Kv4/KCND family. Blocks calcium channels (Cav). This Heteropoda venatoria (Brown huntsman spider) protein is Kappa-sparatoxin-Hv1e.